The primary structure comprises 110 residues: NADH-quinone oxidoreductase subunit K (110 aa).

3 helical membrane passes run 13-33 (VTHG…GIII), 38-58 (ILIL…NFLI), and 70-90 (VFVF…LAIV).

This sequence belongs to the complex I subunit 4L family. NDH-1 is composed of 14 different subunits. Subunits NuoA, H, J, K, L, M, N constitute the membrane sector of the complex.

It localises to the cell inner membrane. It carries out the reaction a quinone + NADH + 5 H(+)(in) = a quinol + NAD(+) + 4 H(+)(out). Functionally, NDH-1 shuttles electrons from NADH, via FMN and iron-sulfur (Fe-S) centers, to quinones in the respiratory chain. The immediate electron acceptor for the enzyme in this species is believed to be ubiquinone. Couples the redox reaction to proton translocation (for every two electrons transferred, four hydrogen ions are translocated across the cytoplasmic membrane), and thus conserves the redox energy in a proton gradient. The protein is NADH-quinone oxidoreductase subunit K of Francisella tularensis subsp. tularensis (strain FSC 198).